A 195-amino-acid polypeptide reads, in one-letter code: L-rhamnose-binding lectin CSL2 (195 aa).

2 SUEL-type lectin domains span residues 1-97 (TRVV…YTCL) and 104-195 (TCEG…YTCG).

Functionally, L-rhamnose binding lectin. Has hemagglutinating activity towards rabbit erythrocytes and human type B erythrocytes. Hemagglutinating activity is inhibited by smooth-type lipopolysaccharide (LPS) from S.flexneri 1A and E.coli K12, but not by rough-type LPS from S.flexneri, E.coli K12 and E.coli EH100. Agglutinates E.coli K12 and B.subtilis. This chain is L-rhamnose-binding lectin CSL2, found in Oncorhynchus keta (Chum salmon).